The chain runs to 459 residues: Sorting nexin-8 (459 aa).

Residues 1–53 (MTGGAMDPLPTAPGAAAAEAEVDEEADPPAADSPVPPVSEPRAPDAGQMQVPP) form a disordered region. A PX domain is found at 68-176 (ARDAVQVELV…KLFLSFSGPD (109 aa)). A 1,2-diacyl-sn-glycero-3-phospho-(1D-myo-inositol-3-phosphate)-binding residues include Arg104, Lys130, and Arg143.

This sequence belongs to the sorting nexin family.

It localises to the early endosome membrane. Functionally, may be involved in several stages of intracellular trafficking. May play a role in intracellular protein transport from early endosomes to the trans-Golgi network. The polypeptide is Sorting nexin-8 (SNX8) (Bos taurus (Bovine)).